A 707-amino-acid chain; its full sequence is Polyribonucleotide nucleotidyltransferase (707 aa).

Residues Asp-486 and Asp-492 each contribute to the Mg(2+) site. In terms of domain architecture, KH spans 553-612 (PRIHIIKINPEKIKDVIGKGGSVIRMLTEETGTIIEIEDDGTVKISSTVKEKAKNAIRRI). Positions 622–690 (GRIYSGKVTR…RQGRLRLSIK (69 aa)) constitute an S1 motif domain.

This sequence belongs to the polyribonucleotide nucleotidyltransferase family. As to quaternary structure, component of the RNA degradosome, which is a multiprotein complex involved in RNA processing and mRNA degradation. Mg(2+) serves as cofactor.

The protein resides in the cytoplasm. It carries out the reaction RNA(n+1) + phosphate = RNA(n) + a ribonucleoside 5'-diphosphate. Its function is as follows. Involved in mRNA degradation. Catalyzes the phosphorolysis of single-stranded polyribonucleotides processively in the 3'- to 5'-direction. The polypeptide is Polyribonucleotide nucleotidyltransferase (Buchnera aphidicola subsp. Acyrthosiphon pisum (strain 5A)).